A 418-amino-acid chain; its full sequence is uncharacterized protein (418 aa).

This is an uncharacterized protein from Escherichia coli (strain K12).